We begin with the raw amino-acid sequence, 294 residues long: Lipoyl synthase (294 aa).

7 residues coordinate [4Fe-4S] cluster: cysteine 38, cysteine 43, cysteine 49, cysteine 64, cysteine 68, cysteine 71, and serine 277. One can recognise a Radical SAM core domain in the interval 50-266; that stretch reads WSRGTATFLL…RSFAEGAGFR (217 aa).

The protein belongs to the radical SAM superfamily. Lipoyl synthase family. Requires [4Fe-4S] cluster as cofactor.

The protein resides in the cytoplasm. The enzyme catalyses [[Fe-S] cluster scaffold protein carrying a second [4Fe-4S](2+) cluster] + N(6)-octanoyl-L-lysyl-[protein] + 2 oxidized [2Fe-2S]-[ferredoxin] + 2 S-adenosyl-L-methionine + 4 H(+) = [[Fe-S] cluster scaffold protein] + N(6)-[(R)-dihydrolipoyl]-L-lysyl-[protein] + 4 Fe(3+) + 2 hydrogen sulfide + 2 5'-deoxyadenosine + 2 L-methionine + 2 reduced [2Fe-2S]-[ferredoxin]. The protein operates within protein modification; protein lipoylation via endogenous pathway; protein N(6)-(lipoyl)lysine from octanoyl-[acyl-carrier-protein]: step 2/2. Catalyzes the radical-mediated insertion of two sulfur atoms into the C-6 and C-8 positions of the octanoyl moiety bound to the lipoyl domains of lipoate-dependent enzymes, thereby converting the octanoylated domains into lipoylated derivatives. The chain is Lipoyl synthase from Pelodictyon phaeoclathratiforme (strain DSM 5477 / BU-1).